Consider the following 229-residue polypeptide: 2,3-bisphosphoglycerate-dependent phosphoglycerate mutase (229 aa).

Residues 8-15 (RHGKSEWN), 21-22 (TG), R60, 87-90 (ERHY), K98, 114-115 (RR), and 183-184 (GN) each bind substrate. The active-site Tele-phosphohistidine intermediate is the H9. E87 (proton donor/acceptor) is an active-site residue.

Belongs to the phosphoglycerate mutase family. BPG-dependent PGAM subfamily. Homodimer.

The enzyme catalyses (2R)-2-phosphoglycerate = (2R)-3-phosphoglycerate. It participates in carbohydrate degradation; glycolysis; pyruvate from D-glyceraldehyde 3-phosphate: step 3/5. In terms of biological role, catalyzes the interconversion of 2-phosphoglycerate and 3-phosphoglycerate. This is 2,3-bisphosphoglycerate-dependent phosphoglycerate mutase from Nautilia profundicola (strain ATCC BAA-1463 / DSM 18972 / AmH).